We begin with the raw amino-acid sequence, 315 residues long: Homoserine kinase (315 aa).

ATP is bound at residue 91–101; that stretch reads PIGSGLGSSAS.

The protein belongs to the GHMP kinase family. Homoserine kinase subfamily.

It localises to the cytoplasm. The catalysed reaction is L-homoserine + ATP = O-phospho-L-homoserine + ADP + H(+). It participates in amino-acid biosynthesis; L-threonine biosynthesis; L-threonine from L-aspartate: step 4/5. Catalyzes the ATP-dependent phosphorylation of L-homoserine to L-homoserine phosphate. This Buchnera aphidicola subsp. Cinara cedri (strain Cc) protein is Homoserine kinase.